The primary structure comprises 424 residues: Protein maelstrom 1 (424 aa).

Positions 2–69 form a DNA-binding region, HMG box; sequence PPKKHSGFMM…LTRVKKERLN (68 aa).

It belongs to the maelstrom family.

It localises to the cytoplasm. It is found in the nucleus. In terms of biological role, involved both in the piRNA and miRNA metabolic processes. As a component of the meiotic nuage, plays a central role during oogenesis by repressing transposable elements and preventing their mobilization, which is essential for the germline integrity. Repression of transposable elements is mediated via the piRNA metabolic process, which mediates the repression of transposable elements during meiosis by forming complexes composed of piRNAs and Piwi proteins and governs the repression of transposons. As a nuclear component, it is required for proper differentiation in the germline stem cell (GSC) lineage by repressing microRNA-7 (miR-7), thereby acting as an indirect regulator of bag-of-marbles (Bam). Acts by binding to the promoter of miR-7 gene and repressing its expression; miR-7 repression alleviates the Bam repression by miR-7, thereby allowing differentiation in the germline stem cell (GSC) lineage. The protein is Protein maelstrom 1 (mael1) of Drosophila ananassae (Fruit fly).